A 2190-amino-acid polypeptide reads, in one-letter code: Integrator complex subunit 1 (2190 aa).

Residues 1 to 61 are disordered; it reads MNRAKPTTVR…GLPSERKRDA (61 aa). The residue at position 13 (Ser-13) is a Phosphoserine. Residues 34-44 are compositionally biased toward polar residues; sequence GQANESKTAST. Lys-47 carries the N6-acetyllysine modification. Phosphothreonine is present on Thr-83. Phosphoserine is present on residues Ser-87, Ser-307, and Ser-924. The disordered stretch occupies residues 922 to 945; sequence AASGEEDDEGESKEQKAKKRQRQQ. A compositionally biased stretch (acidic residues) spans 923 to 932; sequence ASGEEDDEGE. Residues 1159–1179 form a helical membrane-spanning segment; sequence TATMHILVVHAMVILLTLGPP. Positions 1311–1334 are disordered; it reads SLPPRRDSTEAPKPKSSPEQPIGQ. Residues 1314–1323 are compositionally biased toward basic and acidic residues; sequence PRRDSTEAPK. Phosphoserine occurs at positions 1318, 1326, 1327, and 1395.

The protein belongs to the Integrator subunit 1 family. Component of the Integrator complex, composed of core subunits INTS1, INTS2, INTS3, INTS4, INTS5, INTS6, INTS7, INTS8, INTS9/RC74, INTS10, INTS11/CPSF3L, INTS12, INTS13, INTS14 and INTS15. The core complex associates with protein phosphatase 2A subunits PPP2CA and PPP2R1A, to form the Integrator-PP2A (INTAC) complex. Interacts with ESRRB, ESRRB is not a core component of the Integrator complex and this association is a bridge for the interaction with the multiprotein complex Integrator; attracts the transcriptional machinery.

It is found in the nucleus. Its subcellular location is the nucleus membrane. Functionally, component of the integrator complex, a multiprotein complex that terminates RNA polymerase II (Pol II) transcription in the promoter-proximal region of genes. The integrator complex provides a quality checkpoint during transcription elongation by driving premature transcription termination of transcripts that are unfavorably configured for transcriptional elongation: the complex terminates transcription by (1) catalyzing dephosphorylation of the C-terminal domain (CTD) of Pol II subunit POLR2A/RPB1 and SUPT5H/SPT5, (2) degrading the exiting nascent RNA transcript via endonuclease activity and (3) promoting the release of Pol II from bound DNA. The integrator complex is also involved in terminating the synthesis of non-coding Pol II transcripts, such as enhancer RNAs (eRNAs), small nuclear RNAs (snRNAs), telomerase RNAs and long non-coding RNAs (lncRNAs). Within the integrator complex, INTS1 is involved in the post-termination step: INTS1 displaces INTS3 and the SOSS factors, allowing the integrator complex to return to the closed conformation, ready to bind to the paused elongation complex for another termination cycle. Mediates recruitment of cytoplasmic dynein to the nuclear envelope, probably as component of the integrator complex. This chain is Integrator complex subunit 1, found in Homo sapiens (Human).